The sequence spans 1149 residues: MAIRYIFGRAGRGKSYLALEEIKQKLQEEEDNKLFLLVPEQFTLQAERDLIRKQELTGMMRAEVLSFTRLAHRVFSEVGGLTRVPINELGKNMILRKIADESLKELSIYQSIAKQDGFITKLNELICEMKQHDITPTELTMELNEIEEETILKRKLEDITLLYQRFNNYLKGQYVDNEDHVNLLIENIERVEFLEGAEIWIDGFQSFTPQIIRVIEKLAQKVANITITFTMELNAKEKDKDLFHITQKTYLKVKTIAQKFNLDEEVINLDIEERKVLPKEKEIAHIEREFNTYPYKQYADEIANLEIFAGSNLYSEMENVAAQIIHLVRNRGYRWNDIALVSGGLDQYSMILKRVFEEYHIPYFIDEKRSIMNNPMIELILSSIEILSRGYQYEDVFSFLKTGFSDLTKDEVEQLENYVLQYGIRGKAYSEPFTKGFEKKQIQQKDKEEGEKQIDEEKKEKYNELRMRFIAPFAKFEKRIYRKKKIGEITKALFEFMKELNIEDKLNQWIEELREEKYFEYVNENTQIWNKIMEIFDQLTEILADESATLKEYGRILEAGFLACKVGVIPSTIDQVLVGSIERSKSHDIKALFVVGVNDGVLPFGQEDGGILLDHERESLVKKGISIGTTLESSLLEEQFMIYSAFSKPTEYLWVSYALADQEGKAMRQSILIDRFKKLFKNLRIKSDVVNDVDRQLHLITTPISTFKYMTENIRQNVDDKAMADMWWDVYDWYSKEPTWEDRRKLMVKGLFHQNQITYIGENKAKSLYDNPIKSSVSRLERFANCPFSHFVTYGLRPKERKEYQLSNPDIGRLFHDSMEQFTKEMVNEEIQWKDLTKEKNDELVEKVIDEMVPDFEHGIMLSTHRYQYLVTRLKRISKRAMWTLTDHVKKGEFVPMGHEIIFGLEGDVPPIIIELANGEKIYLEGRIDRVDLLNDEEDGNYVKIIDYKSGSKEFSLSDVYYGLQIQLMVYLDAILSSEEKKHQVEIHPGGIFYFKIDDPMVKTTEKVVEEVEKEINKKLKMKGLVLKDVNIIKKMDRSIGRSSTIVPAGLTKDDEISKSSSALPEEDFKALLNHVRRLVKEIGEEMLKGNVKIEPFKKGGDTSCKYCDYIAICQFDNSFHDNQYKNIKELKSDEVLERIKKESQKKLE.

The UvrD-like helicase ATP-binding domain occupies 1–276 (MAIRYIFGRA…INLDIEERKV (276 aa)). An ATP-binding site is contributed by 8-15 (GRAGRGKS). A UvrD-like helicase C-terminal domain is found at 273–586 (ERKVLPKEKE…LVGSIERSKS (314 aa)). 4 residues coordinate [4Fe-4S] cluster: Cys-786, Cys-1105, Cys-1108, and Cys-1114.

Belongs to the helicase family. AddB/RexB type 1 subfamily. Heterodimer of AddA and AddB. It depends on Mg(2+) as a cofactor. [4Fe-4S] cluster is required as a cofactor.

Functionally, the heterodimer acts as both an ATP-dependent DNA helicase and an ATP-dependent, dual-direction single-stranded exonuclease. Recognizes the chi site generating a DNA molecule suitable for the initiation of homologous recombination. The AddB subunit has 5' -&gt; 3' nuclease activity but not helicase activity. This is ATP-dependent helicase/deoxyribonuclease subunit B from Alkaliphilus metalliredigens (strain QYMF).